A 137-amino-acid polypeptide reads, in one-letter code: Small ribosomal subunit protein uS12 (137 aa).

The tract at residues 1 to 57 is disordered; the sequence is MPTINQLVRKPRKSKVEKPKSPALNVGYNSHKKVQTNVSSPQKRGVATRVGTMTPRK. The residue at position 102 (D102) is a 3-methylthioaspartic acid.

The protein belongs to the universal ribosomal protein uS12 family. In terms of assembly, part of the 30S ribosomal subunit. Contacts proteins S8 and S17. May interact with IF1 in the 30S initiation complex.

In terms of biological role, with S4 and S5 plays an important role in translational accuracy. Its function is as follows. Interacts with and stabilizes bases of the 16S rRNA that are involved in tRNA selection in the A site and with the mRNA backbone. Located at the interface of the 30S and 50S subunits, it traverses the body of the 30S subunit contacting proteins on the other side and probably holding the rRNA structure together. The combined cluster of proteins S8, S12 and S17 appears to hold together the shoulder and platform of the 30S subunit. The polypeptide is Small ribosomal subunit protein uS12 (Streptococcus pneumoniae (strain Hungary19A-6)).